A 192-amino-acid chain; its full sequence is Secreted and transmembrane protein 1A (192 aa).

Residues 1 to 27 (MMTCPSVPAIPTLWLFSILLLVVSLNA) form the signal peptide. Topologically, residues 28–165 (QNKSWDNPIC…SSPIEGKPGT (138 aa)) are extracellular. N-linked (GlcNAc...) asparagine glycans are attached at residues N29, N55, N84, and N127. The chain crosses the membrane as a helical span at residues 166–186 (LVGVITVIFILGVAGFITFIY). Residues 187–192 (YRHRRS) lie on the Cytoplasmic side of the membrane.

It belongs to the SECTM family.

The protein resides in the cell membrane. The protein localises to the secreted. This is Secreted and transmembrane protein 1A from Mus musculus (Mouse).